The following is a 106-amino-acid chain: Ferredoxin (106 aa).

[3Fe-4S] cluster contacts are provided by Cys8 and Cys16. [4Fe-4S] cluster-binding residues include Cys20, Cys39, Cys42, and Cys45. In terms of domain architecture, 4Fe-4S ferredoxin-type spans 30–59 (RMLYIHPDECVDCGACEPVCPVEAIYYEDD). Cys49 serves as a coordination point for [3Fe-4S] cluster. The segment at 81–106 (PGGASKVGQTDNDPQAIKDLPPQGED) is disordered.

The cofactor is [4Fe-4S] cluster. Requires [3Fe-4S] cluster as cofactor.

Its function is as follows. Ferredoxins are iron-sulfur proteins that transfer electrons in a wide variety of metabolic reactions. The sequence is that of Ferredoxin (fdxA) from Mycolicibacterium smegmatis (Mycobacterium smegmatis).